The sequence spans 324 residues: MESKKLIPEEVHTSVLLNEVIEWLAPKPGGRYLDGTLGMAGHSSAILKIAGEGAELAGLDRDEQALELAGERLAPFGDRAHRFHLAFSKFEAALDELGWDTVDGVVLDLGVSSLHLDHAERGFSFIKDGPLDMRMDPAGGMPPASSIVNKGSYSDLNRILKLYGEEPLASKITKAIIAAREEEKITTTLQLASIVEKAYPAKRRALSRTHPATKTFQGLRIAVNSELEELKTFLDRIPERLSPGARVAIISFHSLEDRIVKKTFKAQSQSCDCPPMQPICTCGKVKLMNVLTRKPVLPTEEEMKVNTRSRSAKLRVAERTGEDG.

S-adenosyl-L-methionine is bound by residues 40-42, Asp-60, Leu-94, Asp-108, and His-115; that span reads AGH. The tract at residues 301–324 is disordered; that stretch reads EEMKVNTRSRSAKLRVAERTGEDG. Residues 315-324 show a composition bias toward basic and acidic residues; it reads RVAERTGEDG.

The protein belongs to the methyltransferase superfamily. RsmH family.

It localises to the cytoplasm. It catalyses the reaction cytidine(1402) in 16S rRNA + S-adenosyl-L-methionine = N(4)-methylcytidine(1402) in 16S rRNA + S-adenosyl-L-homocysteine + H(+). Specifically methylates the N4 position of cytidine in position 1402 (C1402) of 16S rRNA. The chain is Ribosomal RNA small subunit methyltransferase H from Maridesulfovibrio salexigens (strain ATCC 14822 / DSM 2638 / NCIMB 8403 / VKM B-1763) (Desulfovibrio salexigens).